The sequence spans 314 residues: Fructose-1,6-bisphosphatase class 1 (314 aa).

Residues E91, D112, L114, and D115 each contribute to the Mg(2+) site. Substrate is bound by residues 115–118, Y223, and K254; that span reads DGSS. E260 serves as a coordination point for Mg(2+).

It belongs to the FBPase class 1 family. As to quaternary structure, homotetramer. Requires Mg(2+) as cofactor.

Its subcellular location is the cytoplasm. It catalyses the reaction beta-D-fructose 1,6-bisphosphate + H2O = beta-D-fructose 6-phosphate + phosphate. It functions in the pathway carbohydrate biosynthesis; gluconeogenesis. The sequence is that of Fructose-1,6-bisphosphatase class 1 from Geobacter metallireducens (strain ATCC 53774 / DSM 7210 / GS-15).